Here is a 159-residue protein sequence, read N- to C-terminus: Aspartate carbamoyltransferase regulatory chain (159 aa).

The Zn(2+) site is built by cysteine 111, cysteine 116, cysteine 141, and cysteine 144.

Belongs to the PyrI family. Contains catalytic and regulatory chains. Zn(2+) is required as a cofactor.

In terms of biological role, involved in allosteric regulation of aspartate carbamoyltransferase. This Aeropyrum pernix (strain ATCC 700893 / DSM 11879 / JCM 9820 / NBRC 100138 / K1) protein is Aspartate carbamoyltransferase regulatory chain.